Here is a 67-residue protein sequence, read N- to C-terminus: Conotoxin Cl6.6b (67 aa).

The first 24 residues, 1–24 (MKLTCVLIAAVLLLAVCQLDSADA), serve as a signal peptide directing secretion. Residues 25–37 (TGYMRKNPSLRSP) constitute a propeptide that is removed on maturation. 3 cysteine pairs are disulfide-bonded: Cys-43–Cys-57, Cys-50–Cys-61, and Cys-56–Cys-65.

This sequence belongs to the conotoxin O1 superfamily. As to expression, expressed by the venom duct.

The protein resides in the secreted. The chain is Conotoxin Cl6.6b from Californiconus californicus (California cone).